The primary structure comprises 469 residues: 3-isopropylmalate dehydratase large subunit (469 aa).

[4Fe-4S] cluster contacts are provided by Cys-347, Cys-408, and Cys-411.

The protein belongs to the aconitase/IPM isomerase family. LeuC type 1 subfamily. In terms of assembly, heterodimer of LeuC and LeuD. It depends on [4Fe-4S] cluster as a cofactor.

It carries out the reaction (2R,3S)-3-isopropylmalate = (2S)-2-isopropylmalate. It participates in amino-acid biosynthesis; L-leucine biosynthesis; L-leucine from 3-methyl-2-oxobutanoate: step 2/4. Functionally, catalyzes the isomerization between 2-isopropylmalate and 3-isopropylmalate, via the formation of 2-isopropylmaleate. This Haemophilus influenzae (strain 86-028NP) protein is 3-isopropylmalate dehydratase large subunit.